Here is a 290-residue protein sequence, read N- to C-terminus: Lipid phosphate phosphatase 2 (290 aa).

A run of 3 helical transmembrane segments spans residues 26 to 46 (WLIL…EPFH), 69 to 89 (WAVP…YYFI), and 93 to 113 (VYDL…TGVI). Residue Asn142 is glycosylated (N-linked (GlcNAc...) asparagine). The next 3 helical transmembrane spans lie at 162 to 182 (SFPS…SLYL), 193 to 213 (GHVA…LVGV), and 226 to 246 (VFGG…QFFP).

This sequence belongs to the PA-phosphatase related phosphoesterase family. In terms of tissue distribution, expressed in roots, stems, leaves, buds, flowers and siliques.

Its subcellular location is the membrane. With respect to regulation, PA phosphatase activity not inhibited by N-ethylmaleimide. Its function is as follows. May play a general 'housekeeping role' in lipid metabolism. Exhibits both diacylglycerol pyrophosphate (DGPP) phosphatase and phosphatidate (PA) phosphatase activities with no preference for either substrate. May play a role downstream of the ABA signaling pathway during seed germination and in stomatal movement in leaves. The protein is Lipid phosphate phosphatase 2 (LPP2) of Arabidopsis thaliana (Mouse-ear cress).